The following is a 2048-amino-acid chain: Myoferlin (2048 aa).

The 101-residue stretch at 1-101 (MLRVIVESAT…IGDQNRSLPY (101 aa)) folds into the C2 1 domain. Topologically, residues 1–2012 (MLRVIVESAT…MRFIVWRRFK (2012 aa)) are cytoplasmic. The segment at 124-176 (YTPPSAPHPNDPSGTSVPGMGEEEEEDQGDEDRVDGIVRGPGPKGPSGTVSEA) is disordered. Acidic residues predominate over residues 144-156 (GEEEEEDQGDEDR). Residues Ser170 and Ser174 each carry the phosphoserine modification. C2 domains follow at residues 183–300 (TKGK…RKWL) and 339–475 (DSDD…EATT). The tract at residues 186–281 (KSSRRMLSNK…RADCLMGEFK (96 aa)) is necessary for interaction with EHD2. Residues Asp390, Asp396, Asp444, Asp446, and Asp452 each contribute to the Ca(2+) site. An N6-acetyllysine mark is found at Lys540 and Lys871. C2 domains follow at residues 1110 to 1238 (GANT…LLWH) and 1269 to 1397 (LPSQ…GKED). Ca(2+) is bound by residues Asp1142, Asp1148, Asp1204, and Asp1206. Residue Lys1494 is modified to N6-acetyllysine. 2 consecutive C2 domains span residues 1523-1641 (PAPP…SHCG) and 1759-1907 (GPPG…EKCS). 7 residues coordinate Ca(2+): Asp1556, Asp1562, Asp1611, Asp1613, Asp1878, Ser1881, and Asp1884. The span at 1964–1975 (EADERPAGKGRS) shows a compositional bias: basic and acidic residues. The tract at residues 1964–1986 (EADERPAGKGRSEPNMNPKLDPP) is disordered. Residues 2013–2033 (WVIIGLLLLLILLLFVAVLLY) form a helical membrane-spanning segment. The Extracellular segment spans residues 2034–2048 (SLPNYLSMKIVRPNA).

The protein belongs to the ferlin family. In terms of assembly, interacts with EHD1. Interacts with EHD2; the interaction is direct. Interacts with DNM2 and KDR. Interacts with RIPOR2. Ca(2+) serves as cofactor. As to expression, expressed in myoblasts (at protein level). Expressed in endothelial cells.

The protein resides in the cell membrane. The protein localises to the nucleus membrane. It localises to the cytoplasmic vesicle membrane. In terms of biological role, calcium/phospholipid-binding protein that plays a role in the plasmalemma repair mechanism of endothelial cells that permits rapid resealing of membranes disrupted by mechanical stress. Involved in endocytic recycling. Implicated in VEGF signal transduction by regulating the levels of the receptor KDR. The chain is Myoferlin (Myof) from Mus musculus (Mouse).